A 147-amino-acid polypeptide reads, in one-letter code: uncharacterized protein (147 aa).

This sequence to M.jannaschii MJ1086 N-terminal region.

This is an uncharacterized protein from Methanocaldococcus jannaschii (strain ATCC 43067 / DSM 2661 / JAL-1 / JCM 10045 / NBRC 100440) (Methanococcus jannaschii).